Reading from the N-terminus, the 142-residue chain is MVLSDADKTHVKAIWGKVGGHAGAYAAEALARTFLSFPTTKTYFPHFDLSPGSAQIQGHGKKVADALSQAVAHLDDLPGTLSKLSDLHAHKLRVDPVNFKLLSHCLIVTLAAHLSKDLTPEVHASMDKFFASVATVLTSKYR.

Residues 2–142 (VLSDADKTHV…VATVLTSKYR (141 aa)) form the Globin domain. Residue Ser-4 is modified to Phosphoserine. At Lys-8 the chain carries N6-succinyllysine. Thr-9 carries the phosphothreonine modification. Lys-12 bears the N6-succinyllysine mark. Lys-17 carries the post-translational modification N6-acetyllysine; alternate. Lys-17 carries the post-translational modification N6-succinyllysine; alternate. At Tyr-25 the chain carries Phosphotyrosine. Ser-36 carries the phosphoserine modification. Lys-41 bears the N6-succinyllysine mark. Ser-50 bears the Phosphoserine mark. An O2-binding site is contributed by His-59. His-88 is a binding site for heme b. A Phosphoserine modification is found at Ser-103. A Phosphothreonine modification is found at Thr-109. 2 positions are modified to phosphoserine: Ser-125 and Ser-132. A phosphothreonine mark is found at Thr-135 and Thr-138. Ser-139 is subject to Phosphoserine.

It belongs to the globin family. In terms of assembly, heterotetramer of two alpha chains and two beta chains. Red blood cells.

Its function is as follows. Involved in oxygen transport from the lung to the various peripheral tissues. In terms of biological role, hemopressin acts as an antagonist peptide of the cannabinoid receptor CNR1. Hemopressin-binding efficiently blocks cannabinoid receptor CNR1 and subsequent signaling. This Dasyurus viverrinus (Eastern quoll) protein is Hemoglobin subunit alpha (HBA).